A 569-amino-acid polypeptide reads, in one-letter code: Potassium-transporting ATPase potassium-binding subunit (569 aa).

The next 10 membrane-spanning stretches (helical) occupy residues 11–31 (LLLA…ACVF), 64–84 (LAYT…LYGI), 135–155 (AGLA…ALAV), 179–199 (LYLL…MGIP), 258–278 (FNIL…GKMV), 285–305 (WALI…VYIA), 384–404 (GLYG…LMVG), 423–443 (MLAV…AAVL), 490–510 (LGIS…AIAG), and 531–551 (LFVG…YFPA).

It belongs to the KdpA family. In terms of assembly, the system is composed of three essential subunits: KdpA, KdpB and KdpC.

It localises to the cell inner membrane. In terms of biological role, part of the high-affinity ATP-driven potassium transport (or Kdp) system, which catalyzes the hydrolysis of ATP coupled with the electrogenic transport of potassium into the cytoplasm. This subunit binds the periplasmic potassium ions and delivers the ions to the membrane domain of KdpB through an intramembrane tunnel. In Allorhizobium ampelinum (strain ATCC BAA-846 / DSM 112012 / S4) (Agrobacterium vitis (strain S4)), this protein is Potassium-transporting ATPase potassium-binding subunit.